We begin with the raw amino-acid sequence, 288 residues long: Serine/threonine-protein phosphatase PGAM5, mitochondrial (288 aa).

Over 1-6 (MAFRQA) the chain is Mitochondrial matrix. The helical transmembrane segment at 7–29 (LQLAACGLAGGSAAVLFSAVAVG) threads the bilayer. The Mitochondrial intermembrane portion of the chain corresponds to 30–288 (KPRAGGDADT…FMPPDKITRS (259 aa)). The segment at 76–81 (NVEFGE) is interaction with KEAP1. Ser-86 carries the post-translational modification Phosphoserine. 3 positions are modified to N6-acetyllysine: Lys-115, Lys-143, and Lys-190.

It belongs to the phosphoglycerate mutase family. BPG-dependent PGAM subfamily. As to quaternary structure, dimer. Forms a ternary complex with NFE2L2 and KEAP1. Interacts with BCL2L1 and MAP3K5. Upon TNF-induced necrosis, forms in complex with RIPK1, RIPK3 and MLKL; the formation of this complex leads to PGAM5 phosphorylation. Isoform 2, but not isoform 1, interacts with DNM1L; this interaction leads to DNM1L dephosphorylation and activation and eventually to mitochondria fragmentation. Phosphorylated by the RIPK1/RIPK3 complex under necrotic conditions. This phosphorylation increases PGAM5 phosphatase activity. In terms of processing, proteolytically cleaved by PARL in response to loss of mitochondrial membrane potential.

Its subcellular location is the mitochondrion outer membrane. It is found in the mitochondrion inner membrane. The enzyme catalyses O-phospho-L-seryl-[protein] + H2O = L-seryl-[protein] + phosphate. It carries out the reaction O-phospho-L-threonyl-[protein] + H2O = L-threonyl-[protein] + phosphate. Its function is as follows. Mitochondrial serine/threonine phosphatase that dephosphorylates various substrates and thus plays a role in different biological processes including cellular senescence or mitophagy. Modulates cellular senescence by regulating mitochondrial dynamics. Mechanistically, participates in mitochondrial fission through dephosphorylating DNM1L/DRP1. Additionally, dephosphorylates MFN2 in a stress-sensitive manner and consequently protects it from ubiquitination and degradation to promote mitochondrial network formation. Regulates mitophagy independent of PARKIN by interacting with and dephosphorylating FUNDC1, which interacts with LC3. Regulates anti-oxidative response by forming a tertiary complex with KEAP1 and NRF2. Regulates necroptosis by acting as a RIPK3 target and recruiting the RIPK1-RIPK3-MLKL necrosis 'attack' complex to mitochondria. This Rattus norvegicus (Rat) protein is Serine/threonine-protein phosphatase PGAM5, mitochondrial (Pgam5).